The following is a 640-amino-acid chain: 1-deoxy-D-xylulose-5-phosphate synthase (640 aa).

Thiamine diphosphate is bound by residues His72 and 113–115 (GHA). Asp144 serves as a coordination point for Mg(2+). Thiamine diphosphate contacts are provided by residues 145 to 146 (GA), Asn174, Tyr287, and Glu370. Position 174 (Asn174) interacts with Mg(2+).

The protein belongs to the transketolase family. DXPS subfamily. As to quaternary structure, homodimer. Mg(2+) serves as cofactor. Requires thiamine diphosphate as cofactor.

It catalyses the reaction D-glyceraldehyde 3-phosphate + pyruvate + H(+) = 1-deoxy-D-xylulose 5-phosphate + CO2. It functions in the pathway metabolic intermediate biosynthesis; 1-deoxy-D-xylulose 5-phosphate biosynthesis; 1-deoxy-D-xylulose 5-phosphate from D-glyceraldehyde 3-phosphate and pyruvate: step 1/1. Functionally, catalyzes the acyloin condensation reaction between C atoms 2 and 3 of pyruvate and glyceraldehyde 3-phosphate to yield 1-deoxy-D-xylulose-5-phosphate (DXP). The chain is 1-deoxy-D-xylulose-5-phosphate synthase from Synechocystis sp. (strain ATCC 27184 / PCC 6803 / Kazusa).